The chain runs to 458 residues: ATP synthase subunit beta (458 aa).

ATP is bound at residue 148 to 155; that stretch reads GGAGVGKT.

It belongs to the ATPase alpha/beta chains family. F-type ATPases have 2 components, CF(1) - the catalytic core - and CF(0) - the membrane proton channel. CF(1) has five subunits: alpha(3), beta(3), gamma(1), delta(1), epsilon(1). CF(0) has three main subunits: a(1), b(2) and c(9-12). The alpha and beta chains form an alternating ring which encloses part of the gamma chain. CF(1) is attached to CF(0) by a central stalk formed by the gamma and epsilon chains, while a peripheral stalk is formed by the delta and b chains.

It is found in the cell inner membrane. It catalyses the reaction ATP + H2O + 4 H(+)(in) = ADP + phosphate + 5 H(+)(out). Functionally, produces ATP from ADP in the presence of a proton gradient across the membrane. The catalytic sites are hosted primarily by the beta subunits. The polypeptide is ATP synthase subunit beta (Actinobacillus succinogenes (strain ATCC 55618 / DSM 22257 / CCUG 43843 / 130Z)).